A 514-amino-acid polypeptide reads, in one-letter code: 2-isopropylmalate synthase (514 aa).

The Pyruvate carboxyltransferase domain maps to 5–267 (LIIFDTTLRD…HTDIETREIV (263 aa)). The Mn(2+) site is built by D14, H202, H204, and N238. Residues 393-514 (KLVALRVCSE…QRTHPQVGDV (122 aa)) are regulatory domain.

This sequence belongs to the alpha-IPM synthase/homocitrate synthase family. LeuA type 1 subfamily. In terms of assembly, homodimer. It depends on Mn(2+) as a cofactor.

The protein localises to the cytoplasm. The enzyme catalyses 3-methyl-2-oxobutanoate + acetyl-CoA + H2O = (2S)-2-isopropylmalate + CoA + H(+). It functions in the pathway amino-acid biosynthesis; L-leucine biosynthesis; L-leucine from 3-methyl-2-oxobutanoate: step 1/4. Catalyzes the condensation of the acetyl group of acetyl-CoA with 3-methyl-2-oxobutanoate (2-ketoisovalerate) to form 3-carboxy-3-hydroxy-4-methylpentanoate (2-isopropylmalate). The protein is 2-isopropylmalate synthase of Methylococcus capsulatus (strain ATCC 33009 / NCIMB 11132 / Bath).